A 458-amino-acid polypeptide reads, in one-letter code: SLIT-ROBO Rho GTPase-activating protein 2B (458 aa).

In terms of domain architecture, F-BAR spans 22–324; that stretch reads KEIRAQLTEQ…AVENLDATSD (303 aa). Positions 181–203 are enriched in basic and acidic residues; it reads LKEAEKQEEKQIGKSVKQEDRQT. Positions 181–214 are disordered; that stretch reads LKEAEKQEEKQIGKSVKQEDRQTPRSPDSTANVR. The stretch at 362–400 forms a coiled coil; the sequence is QSELLQRCQQLQSRLSTLKIENEEVKKTMEATLQTIQDI.

As to quaternary structure, may interact with SRGAP2; formation of the heterodimer alters SRGAP2 function.

Functionally, may regulate cell migration and differentiation through interaction with and inhibition of SRGAP2. In contrast to SRGAP2C, it is not able to induce long-lasting changes in synaptic density throughout adulthood. This is SLIT-ROBO Rho GTPase-activating protein 2B (SRGAP2B) from Homo sapiens (Human).